A 281-amino-acid chain; its full sequence is 2-dehydro-3-deoxyphosphooctonate aldolase (281 aa).

The protein belongs to the KdsA family.

It localises to the cytoplasm. The catalysed reaction is D-arabinose 5-phosphate + phosphoenolpyruvate + H2O = 3-deoxy-alpha-D-manno-2-octulosonate-8-phosphate + phosphate. The protein operates within carbohydrate biosynthesis; 3-deoxy-D-manno-octulosonate biosynthesis; 3-deoxy-D-manno-octulosonate from D-ribulose 5-phosphate: step 2/3. Its pathway is bacterial outer membrane biogenesis; lipopolysaccharide biosynthesis. In Pseudomonas paraeruginosa (strain DSM 24068 / PA7) (Pseudomonas aeruginosa (strain PA7)), this protein is 2-dehydro-3-deoxyphosphooctonate aldolase.